Reading from the N-terminus, the 759-residue chain is uncharacterized protein (759 aa).

2 disordered regions span residues 1–31 and 188–211; these read MDGNRRVRFNTDRRPYLSPLQTSFPSSTSFQ and NDEGEDVKDNEQDDNIDESDPFAN. Low complexity predominate over residues 17–31; sequence LSPLQTSFPSSTSFQ. Residues 189-207 are compositionally biased toward acidic residues; that stretch reads DEGEDVKDNEQDDNIDESD. A run of 10 helical transmembrane segments spans residues 434–454, 456–476, 486–505, 517–537, 555–575, 597–617, 620–640, 643–663, 670–690, and 726–746; these read YFRTWILVVFYGFASATILPM, FQGGWIDLPIAFILGCLVGIL, MYNSLFEVTGSIITSFLSRA, FCFSALAEGAIVLILPGYIVL, MFYAIIYSLFLSFGISIGAAL, DKWKILFVPLFTLCLLIVNQA, SQWPVSIFISCAGYVVNYFTA, FGSNPIANAIGSFAIGCLGNI, GVAFAAVLPAIFVQVPSGLAA, and LVMVQIAIGISVGLFASALVV.

It belongs to the ThrE exporter (TC 2.A.79) family.

It is found in the endoplasmic reticulum membrane. This is an uncharacterized protein from Schizosaccharomyces pombe (strain 972 / ATCC 24843) (Fission yeast).